The chain runs to 376 residues: MAKRDYYEVLGVAKNASDDEIKKAYRKLAMKYHPDRNPDSKDAEEHFKEAKEAYEMLSDGQKRAAYDQYGHAGVDPNVGAAGAQGFGGFADAFGDIFGDIFGQAAGGGRARGGPQVYRGADLRYSMEITLEQAAHGYDTQIRVPSWAACGVCHGSGAKPGTKPETCPTCHGQGTVRMSQGFFSIQQTCPKCHGTGTYIPEPCAHCHGSGKVKETKTLEVKIPAGIDDGMRIRSAGNGEPGINGGPSGDLYVEIHIKPHAVFERDGDDLHCQMPIPFTTAALGGEIEVPTLAGRASFTVPEGTQSGKTFRLRGKGIKGLHSSIAGDLYVHVQVETPVKLTDQQRDLLKQFEKSLAEGGPRHSPQSKSWFDRVKSFFE.

In terms of domain architecture, J spans 5–70; that stretch reads DYYEVLGVAK…QKRAAYDQYG (66 aa). The CR-type zinc-finger motif lies at 136 to 214; the sequence is GYDTQIRVPS…CHGSGKVKET (79 aa). C149, C152, C166, C169, C188, C191, C202, and C205 together coordinate Zn(2+). CXXCXGXG motif repeat units follow at residues 149 to 156, 166 to 173, 188 to 195, and 202 to 209; these read CGVCHGSG, CPTCHGQG, CPKCHGTG, and CAHCHGSG.

The protein belongs to the DnaJ family. Homodimer. It depends on Zn(2+) as a cofactor.

Its subcellular location is the cytoplasm. Its function is as follows. Participates actively in the response to hyperosmotic and heat shock by preventing the aggregation of stress-denatured proteins and by disaggregating proteins, also in an autonomous, DnaK-independent fashion. Unfolded proteins bind initially to DnaJ; upon interaction with the DnaJ-bound protein, DnaK hydrolyzes its bound ATP, resulting in the formation of a stable complex. GrpE releases ADP from DnaK; ATP binding to DnaK triggers the release of the substrate protein, thus completing the reaction cycle. Several rounds of ATP-dependent interactions between DnaJ, DnaK and GrpE are required for fully efficient folding. Also involved, together with DnaK and GrpE, in the DNA replication of plasmids through activation of initiation proteins. This chain is Chaperone protein DnaJ, found in Burkholderia mallei (strain NCTC 10229).